Consider the following 294-residue polypeptide: Glyceraldehyde-3-phosphate dehydrogenase (294 aa).

NAD(+)-binding residues include Asp19, Lys63, and Thr105. D-glyceraldehyde 3-phosphate is bound by residues 134–136 (SCT) and Thr165. The active-site Nucleophile is the Cys135. Residues 169–188 (KTVDGPSHKDWRGGRGASQN) are disordered. Residues 194–195 (TG) and Arg217 each bind D-glyceraldehyde 3-phosphate.

This sequence belongs to the glyceraldehyde-3-phosphate dehydrogenase family. Homotetramer.

It is found in the cytoplasm. It catalyses the reaction D-glyceraldehyde 3-phosphate + phosphate + NAD(+) = (2R)-3-phospho-glyceroyl phosphate + NADH + H(+). The protein operates within carbohydrate degradation; glycolysis; pyruvate from D-glyceraldehyde 3-phosphate: step 1/5. In terms of biological role, catalyzes the oxidative phosphorylation of glyceraldehyde 3-phosphate (G3P) to 1,3-bisphosphoglycerate (BPG) using the cofactor NAD. The first reaction step involves the formation of a hemiacetal intermediate between G3P and a cysteine residue, and this hemiacetal intermediate is then oxidized to a thioester, with concomitant reduction of NAD to NADH. The reduced NADH is then exchanged with the second NAD, and the thioester is attacked by a nucleophilic inorganic phosphate to produce BPG. The chain is Glyceraldehyde-3-phosphate dehydrogenase (gap) from Serratia marcescens.